Consider the following 353-residue polypeptide: Protein-arginine kinase (353 aa).

The Phosphagen kinase C-terminal domain occupies 24-256 (IVLSSRIRLA…RTVIDTEEQA (233 aa)). Residues 27–31 (SSRIR), His-93, Arg-127, 178–182 (RASVM), and 209–214 (RGLYGE) each bind ATP. An RDXXRA motif of the pArg binding pocket involved in allosteric regulation motif is present at residues 339–344 (RDVRRA).

The protein belongs to the ATP:guanido phosphotransferase family.

It catalyses the reaction L-arginyl-[protein] + ATP = N(omega)-phospho-L-arginyl-[protein] + ADP + H(+). Appears to be allosterically activated by the binding of pArg-containing polypeptides to the pArg-binding pocket localized in the C-terminal domain of McsB. Functionally, catalyzes the specific phosphorylation of arginine residues in proteins. This is Protein-arginine kinase from Symbiobacterium thermophilum (strain DSM 24528 / JCM 14929 / IAM 14863 / T).